Reading from the N-terminus, the 130-residue chain is Large ribosomal subunit protein eL32 (130 aa).

The protein belongs to the eukaryotic ribosomal protein eL32 family. In terms of assembly, part of the 50S ribosomal subunit.

The protein is Large ribosomal subunit protein eL32 of Pyrococcus furiosus (strain ATCC 43587 / DSM 3638 / JCM 8422 / Vc1).